We begin with the raw amino-acid sequence, 195 residues long: ATP-dependent Clp protease proteolytic subunit (195 aa).

The active-site Nucleophile is the Ser-98. Residue His-123 is part of the active site.

The protein belongs to the peptidase S14 family. As to quaternary structure, fourteen ClpP subunits assemble into 2 heptameric rings which stack back to back to give a disk-like structure with a central cavity, resembling the structure of eukaryotic proteasomes.

It localises to the cytoplasm. The catalysed reaction is Hydrolysis of proteins to small peptides in the presence of ATP and magnesium. alpha-casein is the usual test substrate. In the absence of ATP, only oligopeptides shorter than five residues are hydrolyzed (such as succinyl-Leu-Tyr-|-NHMec, and Leu-Tyr-Leu-|-Tyr-Trp, in which cleavage of the -Tyr-|-Leu- and -Tyr-|-Trp bonds also occurs).. Cleaves peptides in various proteins in a process that requires ATP hydrolysis. Has a chymotrypsin-like activity. Plays a major role in the degradation of misfolded proteins. The chain is ATP-dependent Clp protease proteolytic subunit from Wolinella succinogenes (strain ATCC 29543 / DSM 1740 / CCUG 13145 / JCM 31913 / LMG 7466 / NCTC 11488 / FDC 602W) (Vibrio succinogenes).